A 363-amino-acid chain; its full sequence is Ribosome-binding ATPase YchF (363 aa).

The 254-residue stretch at 3–256 folds into the OBG-type G domain; that stretch reads FKCGIVGLPN…LEDEEKVDFL (254 aa). Residue 12-17 participates in ATP binding; sequence NVGKST. Mg(2+) contacts are provided by serine 16 and threonine 36. Residues 278–361 enclose the TGS domain; sequence NLQTYFTAGV…QDGDVMHFRF (84 aa).

The protein belongs to the TRAFAC class OBG-HflX-like GTPase superfamily. OBG GTPase family. YchF/OLA1 subfamily. It depends on Mg(2+) as a cofactor.

Its function is as follows. ATPase that binds to both the 70S ribosome and the 50S ribosomal subunit in a nucleotide-independent manner. This chain is Ribosome-binding ATPase YchF, found in Haemophilus ducreyi (strain 35000HP / ATCC 700724).